A 424-amino-acid polypeptide reads, in one-letter code: Adenylosuccinate synthetase (424 aa).

Residues 12 to 18 (GDEGKGK) and 40 to 42 (GHT) each bind GTP. D13 (proton acceptor) is an active-site residue. Mg(2+) is bound by residues D13 and G40. IMP contacts are provided by residues 13 to 16 (DEGK), 38 to 41 (NAGH), T130, R144, N220, T235, and R299. The Proton donor role is filled by H41. Position 295–301 (295–301 (VTTGRRR)) interacts with substrate. Residues R301, 327 to 329 (KLD), and 412 to 414 (GTG) each bind GTP.

It belongs to the adenylosuccinate synthetase family. Homodimer. It depends on Mg(2+) as a cofactor.

Its subcellular location is the cytoplasm. The catalysed reaction is IMP + L-aspartate + GTP = N(6)-(1,2-dicarboxyethyl)-AMP + GDP + phosphate + 2 H(+). Its pathway is purine metabolism; AMP biosynthesis via de novo pathway; AMP from IMP: step 1/2. Its function is as follows. Plays an important role in the de novo pathway and in the salvage pathway of purine nucleotide biosynthesis. Catalyzes the first committed step in the biosynthesis of AMP from IMP. The sequence is that of Adenylosuccinate synthetase from Aspergillus fumigatus (strain CBS 144.89 / FGSC A1163 / CEA10) (Neosartorya fumigata).